Reading from the N-terminus, the 335-residue chain is GTPase Obg (335 aa).

The 158-residue stretch at 1-158 (MFLDQITIEL…RQVELELKLI (158 aa)) folds into the Obg domain. In terms of domain architecture, OBG-type G spans 159–334 (ADIGLVGFPN…LNSLFTNRLS (176 aa)). GTP is bound by residues 165 to 172 (GFPNAGKS), 190 to 194 (FTTLQ), 215 to 218 (DIPG), 285 to 288 (NKID), and 315 to 317 (SGL). The Mg(2+) site is built by serine 172 and threonine 192.

The protein belongs to the TRAFAC class OBG-HflX-like GTPase superfamily. OBG GTPase family. As to quaternary structure, monomer. Mg(2+) serves as cofactor.

Its subcellular location is the cytoplasm. An essential GTPase which binds GTP, GDP and possibly (p)ppGpp with moderate affinity, with high nucleotide exchange rates and a fairly low GTP hydrolysis rate. Plays a role in control of the cell cycle, stress response, ribosome biogenesis and in those bacteria that undergo differentiation, in morphogenesis control. In Chlamydia caviae (strain ATCC VR-813 / DSM 19441 / 03DC25 / GPIC) (Chlamydophila caviae), this protein is GTPase Obg.